The sequence spans 115 residues: Large ribosomal subunit protein P2x (115 aa).

The disordered stretch occupies residues 78 to 115; it reads GGGGGAASAAEPVAESKKKVEEVKDESSDDAGMMGLFD. The segment covering 91-103 has biased composition (basic and acidic residues); that stretch reads AESKKKVEEVKDE. Residues Ser-104 and Ser-105 each carry the phosphoserine modification.

This sequence belongs to the eukaryotic ribosomal protein P1/P2 family. P1 and P2 exist as dimers at the large ribosomal subunit.

Its function is as follows. Plays an important role in the elongation step of protein synthesis. The sequence is that of Large ribosomal subunit protein P2x (RPP2C) from Arabidopsis thaliana (Mouse-ear cress).